The following is a 1802-amino-acid chain: Non-reducing polyketide synthase nscA (1802 aa).

The interval aspartate 27–histidine 261 is N-terminal acylcarrier protein transacylase domain (SAT). Residues serine 396 to aspartate 829 enclose the Ketosynthase family 3 (KS3) domain. Active-site for beta-ketoacyl synthase activity residues include cysteine 569, histidine 704, and histidine 747. The interval phenylalanine 935 to arginine 1235 is malonyl-CoA:ACP transacylase (MAT) domain. Residues threonine 1322–proline 1641 form a product template (PT) domain region. An N-terminal hotdog fold region spans residues histidine 1326–alanine 1462. The PKS/mFAS DH domain maps to histidine 1326–aspartate 1636. Residue histidine 1358 is the Proton acceptor; for dehydratase activity of the active site. The tract at residues alanine 1490–aspartate 1636 is C-terminal hotdog fold. Aspartate 1547 acts as the Proton donor; for dehydratase activity in catalysis. The segment at leucine 1699 to serine 1729 is disordered. Residues threonine 1702–proline 1713 show a composition bias toward low complexity. Residues proline 1725 to cysteine 1802 form the Carrier domain. O-(pantetheine 4'-phosphoryl)serine is present on serine 1762.

The cofactor is pantetheine 4'-phosphate.

Its pathway is secondary metabolite biosynthesis. Its function is as follows. Non-reducing polyketide synthase; part of the gene cluster that mediates the biosynthesis of neosartoricin B, a prenylated anthracenone that probably exhibits T-cell antiproliferative activity, suggestive of a physiological role as an immunosuppressive agent. The non-reducing polyketide synthase nscA probably synthesizes and cyclizes the decaketide backbone. The hydrolase nscB then mediates the product release through hydrolysis followed by spontaneous decarboxylation. The prenyltransferase nscD catalyzes the addition of the dimethylallyl group to the aromatic C5. The FAD-dependent monooxygenase nscC is then responsible for the stereospecific hydroxylation at C2. Neosartoricin B can be converted into two additional compounds neosartoricins C and D. Neosartoricin C is a spirocyclic compound that is cyclized through the attack of C3 hydroxyl on C14, followed by dehydration. On the other hand, neosartoricin D is a further cyclized compound in which attack of C2 on C14 in neosartoricin C results in the formation of the acetal-containing dioxabicyclo-octanone ring. Both of these compounds are novel and possibly represent related metabolites of the gene cluster. In Trichophyton tonsurans (strain CBS 112818) (Scalp ringworm fungus), this protein is Non-reducing polyketide synthase nscA.